The sequence spans 680 residues: DNA-directed RNA polymerase subunit beta' (680 aa).

4 residues coordinate Zn(2+): C69, C71, C87, and C90. Mg(2+) is bound by residues D489, D491, and D493.

The protein belongs to the RNA polymerase beta' chain family. RpoC1 subfamily. In plastids the minimal PEP RNA polymerase catalytic core is composed of four subunits: alpha, beta, beta', and beta''. When a (nuclear-encoded) sigma factor is associated with the core the holoenzyme is formed, which can initiate transcription. It depends on Mg(2+) as a cofactor. Zn(2+) is required as a cofactor.

It localises to the plastid. Its subcellular location is the chloroplast. The enzyme catalyses RNA(n) + a ribonucleoside 5'-triphosphate = RNA(n+1) + diphosphate. DNA-dependent RNA polymerase catalyzes the transcription of DNA into RNA using the four ribonucleoside triphosphates as substrates. The chain is DNA-directed RNA polymerase subunit beta' from Manihot esculenta (Cassava).